Here is a 222-residue protein sequence, read N- to C-terminus: Deoxyribose-phosphate aldolase (222 aa).

Asp89 (proton donor/acceptor) is an active-site residue. The active-site Schiff-base intermediate with acetaldehyde is Lys151. Residue Lys180 is the Proton donor/acceptor of the active site.

Belongs to the DeoC/FbaB aldolase family. DeoC type 1 subfamily.

The protein localises to the cytoplasm. It catalyses the reaction 2-deoxy-D-ribose 5-phosphate = D-glyceraldehyde 3-phosphate + acetaldehyde. It participates in carbohydrate degradation; 2-deoxy-D-ribose 1-phosphate degradation; D-glyceraldehyde 3-phosphate and acetaldehyde from 2-deoxy-alpha-D-ribose 1-phosphate: step 2/2. Its function is as follows. Catalyzes a reversible aldol reaction between acetaldehyde and D-glyceraldehyde 3-phosphate to generate 2-deoxy-D-ribose 5-phosphate. This chain is Deoxyribose-phosphate aldolase, found in Acholeplasma laidlawii (strain PG-8A).